The chain runs to 776 residues: Glucocorticoid receptor (776 aa).

A compositionally biased stretch (polar residues) spans 1 to 11 (MDSKESLTSPS). The interval 1-25 (MDSKESLTSPSEEIPSSVHGQERGN) is disordered. Residues 1-419 (MDSKESLTSP…LSAVGPPPKF (419 aa)) are modulating. At Thr-8 the chain carries Phosphothreonine. Arg-23 bears the Omega-N-methylarginine mark. Ser-45, Ser-113, and Ser-134 each carry phosphoserine. The segment at 157–178 (PETPSDVSSEQQNLKGQTGTNG) is disordered. Over residues 161-174 (SDVSSEQQNLKGQT) the composition is skewed to polar residues. Phosphoserine occurs at positions 203, 211, and 226. Lys-258 is covalently cross-linked (Glycyl lysine isopeptide (Lys-Gly) (interchain with G-Cter in SUMO2)). A Phosphoserine modification is found at Ser-267. Glycyl lysine isopeptide (Lys-Gly) (interchain with G-Cter in SUMO); alternate cross-links involve residues Lys-277 and Lys-293. Glycyl lysine isopeptide (Lys-Gly) (interchain with G-Cter in SUMO2); alternate cross-links involve residues Lys-277 and Lys-293. Residues Ser-307 and Ser-404 each carry the phosphoserine modification. Positions 417–492 (PKFCLVCSDE…AGMNLEARKT (76 aa)) form a DNA-binding region, nuclear receptor. Lys-418 is covalently cross-linked (Glycyl lysine isopeptide (Lys-Gly) (interchain with G-Cter in ubiquitin)). 2 NR C4-type zinc fingers span residues 420–440 (CLVC…CGSC) and 456–480 (CAGR…YRKC). An N6-acetyllysine mark is found at Lys-479, Lys-491, Lys-493, and Lys-494. The interaction with CLOCK stretch occupies residues 484–776 (GMNLEARKTK…NIKKLLFHQK (293 aa)). The tract at residues 486-522 (NLEARKTKKKIKGIQQTTTGISQETPENSANKTIVPA) is hinge. One can recognise an NR LBD domain in the interval 523–757 (TLPQLTPTPV…FPEMLAEIIT (235 aa)). An interaction with CRY1 region spans residues 531–696 (PVSLLEVIEP…EIRMTYIKEL (166 aa)). Residue Lys-702 forms a Glycyl lysine isopeptide (Lys-Gly) (interchain with G-Cter in SUMO) linkage.

It belongs to the nuclear hormone receptor family. NR3 subfamily. As to quaternary structure, heteromultimeric cytoplasmic complex with HSP90AA1, HSPA1A/HSPA1B, and FKBP5 or another immunophilin such as PPID, STIP1, or the immunophilin homolog PPP5C. Upon ligand binding FKBP5 dissociates from the complex and FKBP4 takes its place, thereby linking the complex to dynein and mediating transport to the nucleus, where the complex dissociates. Probably forms a complex composed of chaperones HSP90 and HSP70, co-chaperones CDC37, PPP5C, TSC1 and client protein TSC2, CDK4, AKT, RAF1 and NR3C1; this complex does not contain co-chaperones STIP1/HOP and PTGES3/p23. Directly interacts with UNC45A. Binds to DNA as a homodimer, and as heterodimer with NR3C2 or the retinoid X receptor. Binds STAT5A and STAT5B homodimers and heterodimers. Interacts with NRIP1, POU2F1, POU2F2 and TRIM28. Interacts with several coactivator complexes, including the SMARCA4 complex, CREBBP/EP300, TADA2L (Ada complex) and p160 coactivators such as NCOA2 and NCOA6. Interaction with BAG1 inhibits transactivation. Interacts with HEXIM1 and TGFB1I1. Interacts with NCOA1. Interacts with NCOA3, SMARCA4, SMARCC1, SMARCD1, and SMARCE1. Interacts with CLOCK, CRY1 and CRY2 in a ligand-dependent fashion. Interacts with CIART. Interacts with RWDD3. Interacts with UBE2I/UBC9 and this interaction is enhanced in the presence of RWDD3. Interacts with GRIP1. Interacts with NR4A3 (via nuclear receptor DNA-binding domain), represses transcription activity of NR4A3 on the POMC promoter Nur response element (NurRE). Directly interacts with PNRC2 to attract and form a complex with UPF1 and DCP1A; the interaction leads to rapid mRNA degradation. Interacts with GSK3B. Interacts with FNIP1 and FNIP2. Interacts (via C-terminus) with NR3C1 (via C-terminus). Interacts with MCM3AP. Interacts (via domain NR LBD) with HSP90AA1 and HSP90AB1. In the absence of hormonal ligand, interacts with TACC1. Post-translationally, acetylation by CLOCK reduces its binding to glucocorticoid response elements and its transcriptional activity. In terms of processing, increased proteasome-mediated degradation in response to glucocorticoids. Phosphorylated in the absence of hormone; becomes hyperphosphorylated in the presence of glucocorticoid. The Ser-203, Ser-226 and Ser-404-phosphorylated forms are mainly cytoplasmic, and the Ser-211-phosphorylated form is nuclear. Phosphorylation at Ser-211 increases transcriptional activity. Phosphorylation at Ser-203, Ser-226 and Ser-404 decreases signaling capacity. Phosphorylation at Ser-404 may protect from glucocorticoid-induced apoptosis. Phosphorylation at Ser-203 and Ser-211 is not required in regulation of chromosome segregation. May be dephosphorylated by PPP5C, attenuates NR3C1 action. Post-translationally, sumoylation at Lys-277 and Lys-293 negatively regulates its transcriptional activity. Sumoylation at Lys-702 positively regulates its transcriptional activity in the presence of RWDD3. Sumoylation at Lys-277 and Lys-293 is dispensable whereas sumoylation at Lys-702 is critical for the stimulatory effect of RWDD3 on its transcriptional activity. Heat shock increases sumoylation in a RWDD3-dependent manner. In terms of processing, ubiquitinated by UBR5, leading to its degradation: UBR5 specifically recognizes and binds ligand-bound NR3C1 when it is not associated with coactivators (NCOAs). In presence of NCOAs, the UBR5-degron is not accessible, preventing its ubiquitination and degradation.

Its subcellular location is the cytoplasm. It localises to the nucleus. The protein resides in the mitochondrion. The protein localises to the cytoskeleton. It is found in the spindle. Its subcellular location is the microtubule organizing center. It localises to the centrosome. The protein resides in the chromosome. The protein localises to the nucleoplasm. Its function is as follows. Receptor for glucocorticoids (GC). Has a dual mode of action: as a transcription factor that binds to glucocorticoid response elements (GRE), both for nuclear and mitochondrial DNA, and as a modulator of other transcription factors. Affects inflammatory responses, cellular proliferation and differentiation in target tissues. Involved in chromatin remodeling. Plays a role in rapid mRNA degradation by binding to the 5' UTR of target mRNAs and interacting with PNRC2 in a ligand-dependent manner which recruits the RNA helicase UPF1 and the mRNA-decapping enzyme DCP1A, leading to RNA decay. Could act as a coactivator for STAT5-dependent transcription upon growth hormone (GH) stimulation and could reveal an essential role of hepatic GR in the control of body growth. Mediates glucocorticoid-induced apoptosis. Promotes accurate chromosome segregation during mitosis. May act as a tumor suppressor. May play a negative role in adipogenesis through the regulation of lipolytic and antilipogenic gene expression. In Tupaia belangeri (Common tree shrew), this protein is Glucocorticoid receptor (NR3C1).